Reading from the N-terminus, the 501-residue chain is Probable malate:quinone oxidoreductase (501 aa).

This sequence belongs to the MQO family. It depends on FAD as a cofactor.

It catalyses the reaction (S)-malate + a quinone = a quinol + oxaloacetate. It functions in the pathway carbohydrate metabolism; tricarboxylic acid cycle; oxaloacetate from (S)-malate (quinone route): step 1/1. The protein is Probable malate:quinone oxidoreductase of Paenarthrobacter aurescens (strain TC1).